A 446-amino-acid polypeptide reads, in one-letter code: Deoxyguanosinetriphosphate triphosphohydrolase-like protein (446 aa).

The disordered stretch occupies residues 1–28 (MSSSVWQERRHGEDKQRRNDHRSPFQRD). Basic and acidic residues predominate over residues 7–28 (QERRHGEDKQRRNDHRSPFQRD). The HD domain occupies 59–252 (RLTHSLEVSQ…MELADDIAYA (194 aa)).

The protein belongs to the dGTPase family. Type 2 subfamily.

The protein is Deoxyguanosinetriphosphate triphosphohydrolase-like protein of Shewanella sp. (strain ANA-3).